Here is a 985-residue protein sequence, read N- to C-terminus: Vacuolar membrane protease (985 aa).

Residues 1–20 lie on the Cytoplasmic side of the membrane; that stretch reads MASSRAQRFNPIAFTPWPVT. A helical membrane pass occupies residues 21–41; the sequence is CITTIVYLALLIPILVINLVV. The Vacuolar portion of the chain corresponds to 42–388; that stretch reads PSAPETNPKG…MFGTAFAVFR (347 aa). N-linked (GlcNAc...) asparagine glycans are attached at residues N53, N116, and N119. Residues H175 and D187 each coordinate Zn(2+). The Proton acceptor role is filled by E221. E222 serves as a coordination point for Zn(2+). N-linked (GlcNAc...) asparagine glycosylation is present at N238. Zn(2+) is bound by residues E247 and H320. The chain crosses the membrane as a helical span at residues 389–409; it reads LHTLFAISVALLVIAPLVIFV. The Cytoplasmic portion of the chain corresponds to 410 to 440; sequence TNRMYLFSMSKSLEGTGDQVSLRGLRGFSRT. Residues 441–461 form a helical membrane-spanning segment; it reads PIILVTATTIPICLAYLLEKV. The Vacuolar segment spans residues 462 to 470; it reads NPYIVHSSQ. Residues 471–491 form a helical membrane-spanning segment; sequence FSVWSMMFSAWIFLAWFLACA. At 492-502 the chain is on the cytoplasmic side; that stretch reads ADFFRPSALHR. The helical transmembrane segment at 503–523 threads the bilayer; that stretch reads AYSYTWIFIATWIMLVINTVY. At 524-527 the chain is on the vacuolar side; sequence ANQK. Residues 528-548 form a helical membrane-spanning segment; sequence GIAAGYFLLFYFAGAFLATWI. At 549–666 the chain is on the cytoplasmic side; sequence SYLELFALPR…TLPRWTWVLQ (118 aa). The disordered stretch occupies residues 563 to 612; that stretch reads ARQTTGRRPSSLSSRLLTSSADELRSNASPSTAEFPGAAGEDTDPTESTS. Over residues 566–582 the composition is skewed to low complexity; that stretch reads TTGRRPSSLSSRLLTSS. Residues 667–687 traverse the membrane as a helical segment; it reads LLLLAPIVLILVGQLALFLTA. Over 688-700 the chain is Vacuolar; sequence SMCQVGSDGVSTF. Residues 701–721 traverse the membrane as a helical segment; the sequence is VVYLACAVFTTLLCIPLFPLI. The Cytoplasmic segment spans residues 722–727; sequence HRFTYH. Residues 728–748 form a helical membrane-spanning segment; the sequence is IPTFLFLVFIGTLIYNLVAFP. At 749–985 the chain is on the vacuolar side; sequence FSPANRLKTF…VEASHSFTIQ (237 aa). N-linked (GlcNAc...) asparagine glycans are attached at residues N767, N795, and N839.

This sequence belongs to the peptidase M28 family. The cofactor is Zn(2+).

The protein resides in the vacuole membrane. May be involved in vacuolar sorting and osmoregulation. The polypeptide is Vacuolar membrane protease (Ajellomyces capsulatus (strain G186AR / H82 / ATCC MYA-2454 / RMSCC 2432) (Darling's disease fungus)).